Reading from the N-terminus, the 395-residue chain is MGILGLSKLLYDKSPNAIRERELKSFFGRRIAIDASMSIYQFIIAMKGFQDGQGMELTNEQGDVTSHLNGLFARTLRMIDEGIKPIYVFDGKPPKLKADELETRRQKAAEAEREFEKAKDAGDDEMMEKMSKRTVRVSREQIEESKKLLQLMGVPVIQAPSEAEAQCAELVKKGKAWAVGTEDMDALTFGSTVMLRHLNISDAKKRPIAEIHLDEVLQATGLSMDQFVDLCILLGCDYVPKVPGIGPQRAWEGIQRYGNIESFLESLDAAKHMVPPDFCYREARAFFLNPEVTRAEEIDIRFSEPDEAGLIQFLVKEKLFNPDRVNKGIARLRAALTKKTQGRLDNFFTIVKAPPQAAAPRAPLAGRKRSHDGKCVHVSGTLQKATGGHKKAVRK.

The segment at 1–108 (MGILGLSKLL…DELETRRQKA (108 aa)) is N-domain. D34 serves as a coordination point for Mg(2+). DNA is bound at residue R74. Residues D90, E162, E164, D183, and D185 each contribute to the Mg(2+) site. The I-domain stretch occupies residues 126–257 (MMEKMSKRTV…QRAWEGIQRY (132 aa)). DNA is bound at residue E162. G235 and D237 together coordinate DNA. Mg(2+) is bound at residue D237. The interaction with PCNA stretch occupies residues 340–348 (TQGRLDNFF).

The protein belongs to the XPG/RAD2 endonuclease family. FEN1 subfamily. As to quaternary structure, interacts with PCNA. Three molecules of FEN1 bind to one PCNA trimer with each molecule binding to one PCNA monomer. PCNA stimulates the nuclease activity without altering cleavage specificity. Requires Mg(2+) as cofactor. In terms of processing, phosphorylated. Phosphorylation upon DNA damage induces relocalization to the nuclear plasma.

The protein resides in the nucleus. Its subcellular location is the nucleolus. It is found in the nucleoplasm. The protein localises to the mitochondrion. In terms of biological role, structure-specific nuclease with 5'-flap endonuclease and 5'-3' exonuclease activities involved in DNA replication and repair. During DNA replication, cleaves the 5'-overhanging flap structure that is generated by displacement synthesis when DNA polymerase encounters the 5'-end of a downstream Okazaki fragment. It enters the flap from the 5'-end and then tracks to cleave the flap base, leaving a nick for ligation. Also involved in the long patch base excision repair (LP-BER) pathway, by cleaving within the apurinic/apyrimidinic (AP) site-terminated flap. Acts as a genome stabilization factor that prevents flaps from equilibrating into structures that lead to duplications and deletions. Also possesses 5'-3' exonuclease activity on nicked or gapped double-stranded DNA, and exhibits RNase H activity. Also involved in replication and repair of rDNA and in repairing mitochondrial DNA. In Leishmania braziliensis, this protein is Flap endonuclease 1.